The sequence spans 243 residues: 3-deoxy-manno-octulosonate cytidylyltransferase (243 aa).

This sequence belongs to the KdsB family.

The protein localises to the cytoplasm. The enzyme catalyses 3-deoxy-alpha-D-manno-oct-2-ulosonate + CTP = CMP-3-deoxy-beta-D-manno-octulosonate + diphosphate. It participates in nucleotide-sugar biosynthesis; CMP-3-deoxy-D-manno-octulosonate biosynthesis; CMP-3-deoxy-D-manno-octulosonate from 3-deoxy-D-manno-octulosonate and CTP: step 1/1. Its pathway is bacterial outer membrane biogenesis; lipopolysaccharide biosynthesis. In terms of biological role, activates KDO (a required 8-carbon sugar) for incorporation into bacterial lipopolysaccharide in Gram-negative bacteria. The polypeptide is 3-deoxy-manno-octulosonate cytidylyltransferase (Bartonella henselae (strain ATCC 49882 / DSM 28221 / CCUG 30454 / Houston 1) (Rochalimaea henselae)).